Consider the following 242-residue polypeptide: Acetoacetyl-CoA reductase (242 aa).

NADP(+) contacts are provided by residues 12–14 (RGI) and 82–86 (NAGIT). Substrate contacts are provided by residues D88 and 141–144 (QAGQ). Residue Y147 is the Proton acceptor of the active site. Residue 177-180 (PGYI) participates in NADP(+) binding. Residue 178-179 (GY) coordinates substrate.

This sequence belongs to the short-chain dehydrogenases/reductases (SDR) family.

Its subcellular location is the cytoplasm. The catalysed reaction is a (3R)-3-hydroxyacyl-CoA + NADP(+) = a 3-oxoacyl-CoA + NADPH + H(+). It functions in the pathway biopolymer metabolism; poly-(R)-3-hydroxybutanoate biosynthesis. This chain is Acetoacetyl-CoA reductase (phaB), found in Paracoccus denitrificans.